The chain runs to 237 residues: Endonuclease V (237 aa).

Mg(2+) is bound by residues D46 and D114.

It belongs to the endonuclease V family. Mg(2+) is required as a cofactor.

The protein localises to the cytoplasm. It carries out the reaction Endonucleolytic cleavage at apurinic or apyrimidinic sites to products with a 5'-phosphate.. In terms of biological role, DNA repair enzyme involved in the repair of deaminated bases. Selectively cleaves double-stranded DNA at the second phosphodiester bond 3' to a deoxyinosine leaving behind the intact lesion on the nicked DNA. The sequence is that of Endonuclease V from Xanthomonas oryzae pv. oryzae (strain PXO99A).